The chain runs to 415 residues: Coenzyme F420 hydrogenase subunit alpha (415 aa).

4 residues coordinate Ni(2+): cysteine 68, cysteine 71, cysteine 391, and cysteine 394.

Belongs to the [NiFe]/[NiFeSe] hydrogenase large subunit family. In terms of assembly, heterocomplex of the form (alpha(1)beta(1)gamma(1))(8). The cofactor is Ni(2+). Iron-sulfur cluster serves as cofactor. FAD is required as a cofactor.

It carries out the reaction oxidized coenzyme F420-(gamma-L-Glu)(n) + H2 + H(+) = reduced coenzyme F420-(gamma-L-Glu)(n). In terms of biological role, reduces the physiological low-potential two-electron acceptor coenzyme F420, and the artificial one-electron acceptor methylviologen. The sequence is that of Coenzyme F420 hydrogenase subunit alpha (frhA) from Methanocaldococcus jannaschii (strain ATCC 43067 / DSM 2661 / JAL-1 / JCM 10045 / NBRC 100440) (Methanococcus jannaschii).